The chain runs to 464 residues: UDP-N-acetylmuramate--L-alanine ligase (464 aa).

123–129 (GTHGKTT) provides a ligand contact to ATP.

This sequence belongs to the MurCDEF family.

The protein localises to the cytoplasm. It catalyses the reaction UDP-N-acetyl-alpha-D-muramate + L-alanine + ATP = UDP-N-acetyl-alpha-D-muramoyl-L-alanine + ADP + phosphate + H(+). It functions in the pathway cell wall biogenesis; peptidoglycan biosynthesis. Functionally, cell wall formation. This Carboxydothermus hydrogenoformans (strain ATCC BAA-161 / DSM 6008 / Z-2901) protein is UDP-N-acetylmuramate--L-alanine ligase.